The chain runs to 522 residues: Cyclic GMP-AMP synthase (522 aa).

Positions 1–144 are disordered; that stretch reads MQPWHGKAMQ…PPGPWDVPSP (144 aa). DNA-binding regions lie at residues 1–160 and 173–215; these read MQPW…DAAP and KLSR…GSYY. Lys-7 carries the N6-acetyllysine modification. Ser-13 is modified (phosphoserine). Lys-21 is modified (N6-acetyllysine). Residue Ser-37 is modified to Phosphoserine. An N6-acetyllysine mark is found at Lys-47, Lys-50, Lys-56, Lys-62, and Lys-63. Ser-64 carries the post-translational modification Phosphoserine. A compositionally biased stretch (basic and acidic residues) spans 64-73; sequence SAPDTQERPP. Residues 64-75 form a required for association with the cell membrane region; that stretch reads SAPDTQERPPVR. Thr-68 bears the Phosphothreonine mark. Residues Lys-82 and Lys-83 each carry the N6-acetyllysine modification. Residues 88-97 are compositionally biased toward polar residues; that stretch reads AQDTQPSDAT. Thr-91 is modified (phosphothreonine). A phosphoserine mark is found at Ser-98, Ser-116, and Ser-129. The span at 98–118 shows a compositional bias: low complexity; sequence SAPGAEGLEPPAAREPALSRA. The required for activation upon DNA viral infection stretch occupies residues 120-160; sequence SCRQRGARCSTKPRPPPGPWDVPSPGLPVSAPILVRRDAAP. Position 131 is an N6-lactoyllysine (Lys-131). The span at 132 to 144 shows a compositional bias: pro residues; it reads PRPPPGPWDVPSP. Ser-143 carries the phosphoserine modification. Residues 169–174 carry the Nuclear export signal motif; it reads LEKLKL. Residue Lys-173 forms a Glycyl lysine isopeptide (Lys-Gly) (interchain with G-Cter in ubiquitin) linkage. Position 191 is a polyADP-ribosyl aspartic acid (Asp-191). Asn-210 bears the (Microbial infection) Deamidated asparagine; by herpes simplex virus 1/HHV-1 UL37 mark. Thr-211 serves as a coordination point for GTP. Ser-213 is modified (phosphoserine). Ser-213 is a binding site for ATP. The residue at position 215 (Tyr-215) is a Phosphotyrosine; by BLK. Mg(2+)-binding residues include Glu-225 and Asp-227. Residue 225 to 227 coordinates ATP; that stretch reads EFD. Residue Asp-227 coordinates 2',3'-cGAMP. Lys-231 participates in a covalent cross-link: Glycyl lysine isopeptide (Lys-Gly) (interchain with G-Cter in SUMO). Lys-285 is covalently cross-linked (Glycyl lysine isopeptide (Lys-Gly) (interchain with G-Cter in ubiquitin)). 5-glutamyl polyglutamate is present on Glu-286. The short motif at 295–305 is the Nuclear localization signal element; the sequence is DVIMKRKRGGS. The KRKR-loop signature appears at 299-302; it reads KRKR. Ser-305 carries the post-translational modification Phosphoserine; by CDK1 and PKB. Residue Glu-314 is modified to 5-glutamyl glutamate. Position 319 (Asp-319) interacts with GTP. Residue Asp-319 coordinates Mg(2+). Residue Asp-319 participates in 2',3'-cGAMP binding. The interval 341 to 382 is interaction with collided ribosomes; it reads QNWLSAKVRKQLRLKPFYLVPKHAKEGNGFQEETWRLSFSHI. Lys-347 is covalently cross-linked (Glycyl lysine isopeptide (Lys-Gly) (interchain with G-Cter in SUMO); alternate). A Glycyl lysine isopeptide (Lys-Gly) (interchain with G-Cter in ubiquitin); alternate cross-link involves residue Lys-347. Residues Lys-362 and Arg-376 each coordinate 2',3'-cGAMP. 376-383 serves as a coordination point for GTP; sequence RLSFSHIE. 380–383 lines the ATP pocket; that stretch reads SHIE. Lys-384 is subject to N6-acetyllysine. Lys-384 participates in a covalent cross-link: Glycyl lysine isopeptide (Lys-Gly) (interchain with G-Cter in SUMO); alternate. Lys-384 is covalently cross-linked (Glycyl lysine isopeptide (Lys-Gly) (interchain with G-Cter in ubiquitin); alternate). Residues 384–407 are DNA-binding; it reads KEILNNHGKSKTCCENKEEKCCRK. Position 389 is a (Microbial infection) Deamidated asparagine; by herpes simplex virus 1/HHV-1 UL37 (Asn-389). His-390 serves as a coordination point for Zn(2+). Residues Lys-392 and Lys-394 each carry the N6-acetyllysine modification. Lys-394 is covalently cross-linked (Glycyl lysine isopeptide (Lys-Gly) (interchain with G-Cter in SUMO)). Zn(2+)-binding residues include Cys-396, Cys-397, and Cys-404. Residues Cys-404 and Cys-405 are each lipidated (S-palmitoyl cysteine). Residues Lys-411, Lys-414, Lys-427, and Lys-428 each participate in a glycyl lysine isopeptide (Lys-Gly) (interchain with G-Cter in ubiquitin) cross-link. Residue Lys-414 is modified to N6-acetyllysine. Lys-414 provides a ligand contact to ATP. Positions 427–429 match the KKH-loop motif; the sequence is KKH. A phosphoserine mark is found at Ser-434 and Ser-435. 435-439 serves as a coordination point for ATP; sequence SYHVK. Residues Gln-451 and Gln-454 each carry the (Microbial infection) Deamidated glutamine; by herpes simplex virus 1/HHV-1 UL37 modification. A lipid anchor (S-palmitoyl cysteine) is attached at Cys-474. Lys-479 is covalently cross-linked (Glycyl lysine isopeptide (Lys-Gly) (interchain with G-Cter in SUMO); alternate). Residue Lys-479 forms a Glycyl lysine isopeptide (Lys-Gly) (interchain with G-Cter in ubiquitin); alternate linkage. N6-methyllysine is present on Lys-506.

It belongs to the mab-21 family. In terms of assembly, monomer in the absence of DNA. Homodimer in presence of dsDNA: forms a 2:2 dimer with two enzymes binding to two DNA molecules. Interacts with nucleosomes; interaction is mainly mediated via histones H2A and H2B and inactivates the nucleotidyltransferase activity by blocking DNA-binding and subsequent activation. Interacts with PQBP1 (via WW domain). Interacts with TRIM14; this interaction recruits USP14, leading to deubiquitinate and stabilize CGAS and promote type I interferon production. Interacts with ZCCHC3; promoting sensing of dsDNA by CGAS. Interacts (when not monomethylated) with (poly-ADP-ribosylated) PARP1; interaction takes place in the nucleus and prevents the formation of the PARP1-TIMELESS complex. Interacts (when monomethylated) with SGF29; interaction with SGF29 prevents interaction with PARP1. Interacts with PCBP2; preventing the formation of liquid-like droplets in which CGAS is activated. Interacts with IRGM; promoting CGAS degradation. Interacts with DDX41. As to quaternary structure, (Microbial infection) Interacts with herpes virus 8/HHV-8 protein ORF52; this interaction inhibits cGAS enzymatic activity by preventing the formation of liquid-like droplets by CGAS. (Microbial infection) Interacts with herpes simplex virus 1 protein UL37; this interaction deaminates CGAS and inhibits its activation. In terms of assembly, (Microbial infection) Interacts with vaccinia virus protein OPG067; this interaction promotes CGAS proteasomal degradation. As to quaternary structure, (Microbial infection) Interacts with cytomegalovirus protein UL31; this interaction promotes dissociation of DNA from CGAS, thereby inhibiting the enzymatic activity of CGAS. (Microbial infection) Interacts with herpes simplex virus 1 tegument protein VP22 (UL49); this interaction inhibits cGAS enzymatic activity by preventing the formation of liquid-like droplets by CGAS. In terms of assembly, (Microbial infection) Interacts with herpesvirus 3 tegument protein VP22 (ORF9); this interaction inhibits cGAS enzymatic activity by preventing the formation of liquid-like droplets by CGAS. As to quaternary structure, (Microbial infection) Interacts with human cytomegalovirus proteins UL42 and UL83; these interactions result in the inhibition of cGAS-STING signaling. Mg(2+) is required as a cofactor. The cofactor is Mn(2+). It depends on Zn(2+) as a cofactor. Post-translationally, the N-terminal disordered part (1-160) is phosphorylated by AURKB during the G2-M transition, blocking CGAS liquid phase separation and preventing activation. Phosphorylation at Tyr-215 by BLK promotes cytosolic retention. Localizes into the nucleus following dephosphorylation at Tyr-215. Phosphorylation at Ser-435 activates the nucleotidyltransferase activity. Dephosphorylation at Ser-435 by PPP6C impairs its ability to bind GTP, thereby inactivating it. Phosphorylation at Thr-68 and Ser-213 by PRKDC inhibits its cyclic GMP-AMP synthase activity by impairing homodimerization and activation. Phosphorylation at Ser-305 by AKT (AKT1, AKT2 or AKT3) suppresses the nucleotidyltransferase activity. Phosphorylation at Ser-305 by CDK1 during mitosis leads to its inhibition, thereby preventing CGAS activation by self-DNA during mitosis. Dephosphorylated at Ser-305 by protein phosphatase PP1 upon mitotic exit. In terms of processing, ubiquitinated at Lys-414 via 'Lys-48'-linked polyubiquitin chains, leading to its SQSTM1-mediated autophagic degradation. Interaction with TRIM14 promotes recruitment of USP14, leading to deubiquitinate Lys-414 and stabilize CGAS. Ubiquitinated at Lys-173 and Lys-384 by RNF185 via 'Lys-27'-linked polyubiquitination, promoting CGAS cyclic GMP-AMP synthase activity. Monoubiquitination at Lys-347 by TRIM56 promotes oligomerization and subsequent activation. Monoubiquitination by TRIM41 promotes CGAS activation. Ubiquitination at Lys-285 and Lys-479 via 'Lys-48'-linked polyubiquitination promotes its degradation. Deubiquitination at Lys-285 by USP29 promotes its stabilization. Deubiquitinated by USP27X, promoting its stabilization. Ubiquitinated at Lys-411 via 'Lys-63'-linked polyubiquitin chains by MARCHF8, leading to the inhibition of its DNA binding ability. In cycling cells, nucleosome-bound CGAS is ubiquitinated at Lys-427 and Lys-428 via 'Lys-48'-linked polyubiquitin chains by the ECS(SPSB3) complex, leading to its degradation: ubiquitination and degradation of nuclear CGAS during G1 and G2 phases is required to promote low intranuclear CGAS abundance before the next mitotic cycle. Sumoylated at Lys-231 and Lys-479 by TRIM38 in uninfected cells and during the early phase of viral infection, promoting its stability by preventing ubiquitination at Lys-285 and Lys-479, and subsequent degradation. Desumoylated by SENP2 during the late phase of viral infection. Sumoylation at Lys-347, Lys-384 and Lys-394 prevents DNA-binding, oligomerization and nucleotidyltransferase activity. Desumoylation at Lys-347, Lys-384 and Lys-394 by SENP7 relieves inhibition and activates CGAS. Post-translationally, polyglutamylated by TTLL6 at Glu-286, leading to impair DNA-binding activity. Monoglutamylated at Glu-314 by TTLL4, leading to impair the nucleotidyltransferase activity. Deglutamylated by AGBL5/CCP5 and AGBL6/CCP6. In terms of processing, acetylation at Lys-384, Lys-394 and Lys-414 inhibits the cyclic GMP-AMP synthase activity. Deacetylated upon cytosolic DNA challenge such as viral infections. Acetylation can be mediated by aspirin (acetylsalicylate) drug, which directly acetylates CGAS. Acetylation by aspirin efficiently inhibits CGAS-mediated immune responses and is able to suppress self-DNA-induced autoimmunity. Acetylation at Lys-47, Lys-56, Lys-62 and Lys-83 by KAT5 increases the cyclic GMP-AMP synthase activity by promoting DNA-binding and subsequent activation. Proteolytically cleaved by apoptotic caspases during apoptosis, leading to its inactivation. The damage of the nucleus and the mitochondria during apoptosis leads to leakage of nuclear and mitochondrial DNA, which activate CGAS: cleavage and inactivation during apoptosis in required to prevent cytokine overproduction. Cleaved by CASP3 at Asp-319 during virus-induced apoptosis, thereby inactivating it and preventing cytokine overproduction. Cleaved by CASP1 at Asp-140 and Asp-157 upon DNA virus infection; the cleavage impairs cGAMP production. Also cleaved by the pyroptotic CASP4 and CASP5 during non-canonical inflammasome activation; they don't cut at the same sites than CASP1. Post-translationally, degraded via selective autophagy following interaction with IRGM. IRGM promotes CGAS recruitment to autophagosome membranes, promoting its SQSTM1/p62-dependent autophagic degradation. In terms of processing, poly-ADP-ribosylation at Asp-191 by PARP1 impairs DNA-binding, thereby preventing the cyclic GMP-AMP synthase activity. Palmitoylation at Cys-474 by ZDHHC18 impairs DNA-binding, thereby preventing the cyclic GMP-AMP synthase activity. Palmitoylation at Cys-404 and Cys-405 by ZDHHC9 promotes homodimerization and cyclic GMP-AMP synthase activity. Depalmitoylation at Cys-404 and Cys-405 by LYPLAL1 impairs homodimerization and cyclic GMP-AMP synthase activity. Post-translationally, monomethylated at Lys-506 by SETD7. Monomethylation promotes interaction with SGF29, preventing interaction between PARP1 nad SGF29. Demethylation by RIOX1 promotes interaction with PARP1, followed by PARP1 inactivation. In terms of processing, lactylation by AARS2 prevents ability to undergo liquid-liquid phase separation (LLPS), thereby inhibiting CGAS activation. (Microbial infection) Deamidated on 'Asn-210' by herpes simplex virus 1 protein UL37. This modification significantly reduces CGAS-dependent cGAMP production and innate immune signaling induced by dsDNA. Post-translationally, (Microbial infection) Degraded by an autophagy-mediated mechanism in presence of Chikungunya virus capsid protein. Expressed in the monocytic cell line THP1.

It is found in the nucleus. The protein localises to the chromosome. It localises to the cell membrane. Its subcellular location is the cytoplasm. The protein resides in the cytosol. The catalysed reaction is GTP + ATP = 2',3'-cGAMP + 2 diphosphate. It carries out the reaction GTP + ATP = pppGp(2'-5')A + diphosphate. It catalyses the reaction pppGp(2'-5')A = 2',3'-cGAMP + diphosphate. The enzyme activity is strongly increased by double-stranded DNA (dsDNA), but not by single-stranded DNA or RNA. DNA-binding induces the formation of liquid-like droplets in which CGAS is activated. Liquid-like droplets also create a selective environment that restricts entry of negative regulators, such as TREX1 or BANF1/BAF, allowing sensing of DNA. A number of mechanisms exist to restrict its activity toward self-DNA. The nucleotidyltransferase activity is inhibited in the nucleus via its association with nucleosomes: interacts with the acidic patch of histones H2A and H2B, thereby blocking DNA-binding and subsequent activation. CGAS is also inactive when associated with mitotic chromatin. Chromatin-bound CGAS cannot be activated by exogenous DNA in mitotic cells: phosphorylation of the N-terminal disordered part by AURKB during the G2-M transition blocks CGAS liquid phase separation and activation. Activity toward self-DNA is inhibited by BANF1/BAF upon acute loss of nuclear membrane integrity: BANF1/BAF acts by outcompeting CGAS for DNA-binding, thereby preventing CGAS activation. DNA-induced activation at micronuclei is also limited by TREX1, which degrades micronuclear DNA upon nuclear envelope rupture, thereby preventing CGAS activation. CGAS can be released from nucleosomes and activated by MRE11 component of the MRN complex, which displaces CGAS from acidic-patch-mediated sequestration. Acetylation at Lys-384, Lys-394 and Lys-414 inhibits the cyclic GMP-AMP synthase activity. Inhibited by aspirin (acetylsalicylate) drug, which acetylates CGAS. Acetylation by KAT5 increases the cyclic GMP-AMP synthase activity by promoting DNA-binding and subsequent activation. Phosphorylation at Ser-305 suppresses the nucleotidyltransferase activity. Phosphorylation at Ser-435 promotes the cyclic GMP-AMP synthase activity. Phosphorylation at Thr-68 and Ser-213 inhibits its cyclic GMP-AMP synthase activity. Ubiquitination at Lys-173 and Lys-384 via 'Lys-27'-linked polyubiquitination enhances the cyclic GMP-AMP synthase activity. Monoubiquitination at Lys-347 promotes oligomerization and subsequent activation. Sumoylation at Lys-347, Lys-384 and Lys-394 prevents DNA-binding, oligomerization and nucleotidyltransferase activity. The enzyme activity is impaired by the cleavage at Asp-140 and Asp-157 produced by CASP1. In addition to DNA, also activated by collided ribosomes upon translation stress: specifically binds collided ribosomes, promoting its activation and triggering type-I interferon production. Strongly inhibited by compound PF-06928215, which is specific for human protein. Inhibited by small-molecule inhibitors with a pyridoindole tricyclic core G108, G140 and G150. Its activity is regulated as follows. (Microbial infection) Nucleotidyltransferase activity is inhibited by different herpesvirus tegument proteins (Herpes simplex virus 1 tegument protein VP22, herpes virus 8 protein ORF52 and herpesvirus 3 tegument protein VP22/ORF9). Viral tegument proteins act by disrupting liquid-like droplets in which CGAS is activated, thereby preventing CGAS activity. In terms of biological role, nucleotidyltransferase that catalyzes the formation of cyclic GMP-AMP (2',3'-cGAMP) from ATP and GTP and plays a key role in innate immunity. Catalysis involves both the formation of a 2',5' phosphodiester linkage at the GpA step and the formation of a 3',5' phosphodiester linkage at the ApG step, producing c[G(2',5')pA(3',5')p]. Acts as a key DNA sensor: directly binds double-stranded DNA (dsDNA), inducing the formation of liquid-like droplets in which CGAS is activated, leading to synthesis of 2',3'-cGAMP, a second messenger that binds to and activates STING1, thereby triggering type-I interferon production. Preferentially recognizes and binds curved long dsDNAs of a minimal length of 40 bp. Acts as a key foreign DNA sensor, the presence of double-stranded DNA (dsDNA) in the cytoplasm being a danger signal that triggers the immune responses. Has antiviral activity by sensing the presence of dsDNA from DNA viruses in the cytoplasm. Also acts as an innate immune sensor of infection by retroviruses, such as HIV-2, by detecting the presence of reverse-transcribed DNA in the cytosol. In contrast, HIV-1 is poorly sensed by CGAS, due to its capsid that cloaks viral DNA from CGAS detection. Detection of retroviral reverse-transcribed DNA in the cytosol may be indirect and be mediated via interaction with PQBP1, which directly binds reverse-transcribed retroviral DNA. Also detects the presence of DNA from bacteria, such as M.tuberculosis. 2',3'-cGAMP can be transferred from producing cells to neighboring cells through gap junctions, leading to promote STING1 activation and convey immune response to connecting cells. 2',3'-cGAMP can also be transferred between cells by virtue of packaging within viral particles contributing to IFN-induction in newly infected cells in a cGAS-independent but STING1-dependent manner. Also senses the presence of neutrophil extracellular traps (NETs) that are translocated to the cytosol following phagocytosis, leading to synthesis of 2',3'-cGAMP. In addition to foreign DNA, can also be activated by endogenous nuclear or mitochondrial DNA. When self-DNA leaks into the cytosol during cellular stress (such as mitochondrial stress, SARS-CoV-2 infection causing severe COVID-19 disease, DNA damage, mitotic arrest or senescence), or is present in form of cytosolic micronuclei, CGAS is activated leading to a state of sterile inflammation. Acts as a regulator of cellular senescence by binding to cytosolic chromatin fragments that are present in senescent cells, leading to trigger type-I interferon production via STING1 and promote cellular senescence. Also involved in the inflammatory response to genome instability and double-stranded DNA breaks: acts by localizing to micronuclei arising from genome instability. Micronuclei, which are frequently found in cancer cells, consist of chromatin surrounded by their own nuclear membrane: following breakdown of the micronuclear envelope, a process associated with chromothripsis, CGAS binds self-DNA exposed to the cytosol, leading to 2',3'-cGAMP synthesis and subsequent activation of STING1 and type-I interferon production. Activated in response to prolonged mitotic arrest, promoting mitotic cell death. In a healthy cell, CGAS is however kept inactive even in cellular events that directly expose it to self-DNA, such as mitosis, when cGAS associates with chromatin directly after nuclear envelope breakdown or remains in the form of postmitotic persistent nuclear cGAS pools bound to chromatin. Nuclear CGAS is inactivated by chromatin via direct interaction with nucleosomes, which block CGAS from DNA binding and thus prevent CGAS-induced autoimmunity. Also acts as a suppressor of DNA repair in response to DNA damage: inhibits homologous recombination repair by interacting with PARP1, the CGAS-PARP1 interaction leading to impede the formation of the PARP1-TIMELESS complex. In addition to DNA, also sense translation stress: in response to translation stress, translocates to the cytosol and associates with collided ribosomes, promoting its activation and triggering type-I interferon production. In contrast to other mammals, human CGAS displays species-specific mechanisms of DNA recognition and produces less 2',3'-cGAMP, allowing a more fine-tuned response to pathogens. This Homo sapiens (Human) protein is Cyclic GMP-AMP synthase.